The following is a 471-amino-acid chain: Thymidine phosphorylase (471 aa).

Residues 1 to 10 show a composition bias toward pro residues; it reads MAAPGTPPPS. Residues 1-21 are disordered; that stretch reads MAAPGTPPPSASGGGGGEPRQ. Thr6 is subject to Phosphothreonine. Substrate contacts are provided by His102, Arg188, Ser203, and Lys207.

Belongs to the thymidine/pyrimidine-nucleoside phosphorylase family. In terms of assembly, homodimer.

The enzyme catalyses thymidine + phosphate = 2-deoxy-alpha-D-ribose 1-phosphate + thymine. It participates in pyrimidine metabolism; dTMP biosynthesis via salvage pathway; dTMP from thymine: step 1/2. Catalyzes the reversible phosphorolysis of thymidine. The produced molecules are then utilized as carbon and energy sources or in the rescue of pyrimidine bases for nucleotide synthesis. The chain is Thymidine phosphorylase (Tymp) from Mus musculus (Mouse).